A 91-amino-acid chain; its full sequence is uncharacterized protein (91 aa).

This is an uncharacterized protein from Rickettsia prowazekii (strain Madrid E).